A 763-amino-acid chain; its full sequence is Forkhead box protein M1 (763 aa).

The tract at residues 1-53 (MKTSPRRPLILKRRRLPLPVQNAPSETSEEEPKRSPAQQESNQAEASKEVAES) is disordered. A compositionally biased stretch (polar residues) spans 36–45 (PAQQESNQAE). Residues K163, K201, and K325 each participate in a glycyl lysine isopeptide (Lys-Gly) (interchain with G-Cter in SUMO2) cross-link. Residues 198–232 (RSIKQEMEEKENCHLEQRQVKVEEPSRPSASWQNS) form a disordered region. The span at 200 to 223 (IKQEMEEKENCHLEQRQVKVEEPS) shows a compositional bias: basic and acidic residues. A DNA-binding region (fork-head) is located at residues 235-327 (ERPPYSYMAM…LTLDQVFKPL (93 aa)). Positions 329–351 (PGSPQLPEHLESQQKRPNPELRR) are disordered. The residue at position 331 (S331) is a Phosphoserine. Residues 336-351 (EHLESQQKRPNPELRR) are compositionally biased toward basic and acidic residues. K356 participates in a covalent cross-link: Glycyl lysine isopeptide (Lys-Gly) (interchain with G-Cter in SUMO2). The residue at position 376 (S376) is a Phosphoserine; by CHEK2. Residues K422 and K440 each participate in a glycyl lysine isopeptide (Lys-Gly) (interchain with G-Cter in SUMO2) cross-link. Residues 482–711 (PPLEEWPSPA…PGSPEPQVSG (230 aa)) are disordered. Position 489 is a phosphoserine; by GSK3 (S489). Residues 494–503 (FKEESSHSWE) are compositionally biased toward basic and acidic residues. A Phosphoserine modification is found at S522. A compositionally biased stretch (polar residues) spans 583 to 592 (DPASQLSYSQ). T611 carries the post-translational modification Phosphothreonine; by CDK1. Residues T620, T627, and T662 each carry the phosphothreonine modification. The residue at position 693 (S693) is a Phosphoserine; by CDK1. 2 positions are modified to phosphoserine; by PLK1: S730 and S739.

As to quaternary structure, interacts with PINT87aa which is encoded by the circular form of the long non-coding RNA LINC-PINT; the interaction inhibits FOXM1-mediated transcription of PHB2. Phosphorylated in M (mitotic) phase. Phosphorylation by the checkpoint kinase CHEK2 in response to DNA damage increases the FOXM1 protein stability probably stimulating the transcription of genes involved in DNA repair. Phosphorylated by CDK1 in late S and G2 phases, creating docking sites for the POLO box domains of PLK1. Subsequently, PLK1 binds and phosphorylates FOXM1, leading to activation of transcriptional activity and subsequent enhanced expression of key mitotic regulators. Phosphorylated by GSK3B leading to ubiquitination and proteasomal degradation. In terms of processing, ubiquitinated in a FBXW7-dependent manner leading to proteasomal degradation. As to expression, expressed in thymus, testis, small intestine, colon followed by ovary. Appears to be expressed only in adult organs containing proliferating/cycling cells or in response to growth factors. Also expressed in epithelial cell lines derived from tumors. Not expressed in resting cells. Isoform 2 is highly expressed in testis.

It is found in the nucleus. Functionally, transcription factor regulating the expression of cell cycle genes essential for DNA replication and mitosis. Plays a role in the control of cell proliferation. Also plays a role in DNA break repair, participating in the DNA damage checkpoint response. Promotes transcription of PHB2. This Homo sapiens (Human) protein is Forkhead box protein M1 (FOXM1).